The following is a 122-amino-acid chain: MIQMQSILEVADNSGAKKVMCIKVLGGSHHMVAKLGDVIVVSIKEAIPGGKVKKGDVYKGVIVRTKTGVVRADGSTIKFDKNALVLLNKQDEPIGTRVFGPVTRELRAKKYVRIMSLAEEVL.

The protein belongs to the universal ribosomal protein uL14 family. As to quaternary structure, part of the 50S ribosomal subunit. Forms a cluster with proteins L3 and L19. In the 70S ribosome, L14 and L19 interact and together make contacts with the 16S rRNA in bridges B5 and B8.

In terms of biological role, binds to 23S rRNA. Forms part of two intersubunit bridges in the 70S ribosome. In Rickettsia bellii (strain OSU 85-389), this protein is Large ribosomal subunit protein uL14.